A 420-amino-acid polypeptide reads, in one-letter code: Pre-mRNA-splicing factor RBM22 (420 aa).

Residues 159–186 (RNRPHICSFWVKGECKRGEECPYRHEKP) form a C3H1-type zinc finger. The RRM domain occupies 232-305 (TTLYVGGLGD…RRLNVKWGRS (74 aa)). Disordered stretches follow at residues 303 to 343 (GRSQ…AAEE) and 372 to 420 (APPP…HSSP). Positions 309–318 (RGKEKDKEGT) are enriched in basic and acidic residues.

Belongs to the SLT11 family. In terms of assembly, component of the pre-catalytic and catalytic spliceosome complexes. Component of the postcatalytic spliceosome P complex.

Its subcellular location is the nucleus. The protein resides in the cytoplasm. Functionally, required for pre-mRNA splicing as component of the activated spliceosome. Involved in the first step of pre-mRNA splicing. Binds directly to the internal stem-loop (ISL) domain of the U6 snRNA and to the pre-mRNA intron near the 5' splice site during the activation and catalytic phases of the spliceosome cycle. This is Pre-mRNA-splicing factor RBM22 (RBM22) from Gallus gallus (Chicken).